The sequence spans 549 residues: Teichoic acids export ATP-binding protein TagH (549 aa).

Positions 22–243 (DKLKDLFRKQ…YRAFLKEYNQ (222 aa)) constitute an ABC transporter domain. 57-64 (GLNGSGKS) lines the ATP pocket. Residues 244–549 (MSMEDRKKFQ…EIQSISIVKK (306 aa)) are unknown. The 70-residue stretch at 346–415 (ENMYMVKSNG…VSTKFIEPFK (70 aa)) folds into the SH3b domain.

This sequence belongs to the ABC transporter superfamily. Teichoic acids exporter (TC 3.A.1.104.1) family. In terms of assembly, the complex is composed of two ATP-binding proteins (TagH) and two transmembrane proteins (TagG).

The protein localises to the cell membrane. It carries out the reaction ATP + H2O + teichoic acidSide 1 = ADP + phosphate + teichoic acidSide 2.. In terms of biological role, part of the ABC transporter complex TagGH involved in teichoic acids export. Responsible for energy coupling to the transport system. The protein is Teichoic acids export ATP-binding protein TagH of Bacillus cereus (strain ZK / E33L).